The chain runs to 144 residues: MDDENLWKVVKKDSIFETTHFSSKPVFTRSFSTKTSSSSSKPVFTRSFSTKPTSYSSSEPIFRRSFSAKPTSSKSPFLSRSGSTKCPVDTSSTSKCSISRSLSQKGASVTRKCRNMAKEHKSRFYIMKRCVLMLVCWHKHACDS.

Low complexity predominate over residues 30–58 (SFSTKTSSSSSKPVFTRSFSTKPTSYSSS). Residues 30 to 89 (SFSTKTSSSSSKPVFTRSFSTKPTSYSSSEPIFRRSFSAKPTSSKSPFLSRSGSTKCPVD) are disordered. A helical membrane pass occupies residues 42–58 (PVFTRSFSTKPTSYSSS). Polar residues predominate over residues 68 to 84 (AKPTSSKSPFLSRSGST). Residues 108 to 139 (SVTRKCRNMAKEHKSRFYIMKRCVLMLVCWHK) are required for DVL/RTFL small polypeptide activity.

Belongs to the DVL/RTFL small polypeptides family.

The protein localises to the cell membrane. Its function is as follows. Small polypeptide acting as a regulatory molecule which coordinates cellular responses required for differentiation, growth and development, probably by restricting polar cell proliferation in lateral organs and coordinating socket cell recruitment and differentiation at trichome sites. This Arabidopsis thaliana (Mouse-ear cress) protein is Small polypeptide DEVIL 18.